Reading from the N-terminus, the 430-residue chain is Gamma-glutamyl phosphate reductase (430 aa).

The protein belongs to the gamma-glutamyl phosphate reductase family.

The protein resides in the cytoplasm. The enzyme catalyses L-glutamate 5-semialdehyde + phosphate + NADP(+) = L-glutamyl 5-phosphate + NADPH + H(+). It functions in the pathway amino-acid biosynthesis; L-proline biosynthesis; L-glutamate 5-semialdehyde from L-glutamate: step 2/2. Functionally, catalyzes the NADPH-dependent reduction of L-glutamate 5-phosphate into L-glutamate 5-semialdehyde and phosphate. The product spontaneously undergoes cyclization to form 1-pyrroline-5-carboxylate. This Rhodopseudomonas palustris (strain ATCC BAA-98 / CGA009) protein is Gamma-glutamyl phosphate reductase.